Here is an 816-residue protein sequence, read N- to C-terminus: H(+)/Cl(-) exchange transporter 5 (816 aa).

The tract at residues 1 to 28 (MAMWQGAMDNRGFQQGSFNSFQSSSSDE) is disordered. At 1 to 124 (MAMWQGAMDN…WALIHSVSDA (124 aa)) the chain is on the cytoplasmic side. Low complexity predominate over residues 12–25 (GFQQGSFNSFQSSS). 2 helical membrane-spanning segments follow: residues 125–162 (FSGW…ICTE) and 208–231 (VNYF…VKVF). The short motif at 237–241 (GSGIP) is the Selectivity filter part_1 element. Serine 238 provides a ligand contact to chloride. The segment at residues 240–247 (IPEIKTIL) is an intramembrane region (helical). The next 2 membrane-spanning stretches (helical) occupy residues 256 to 275 (LGKW…VSSG) and 281 to 300 (EGPL…HCFN). The short motif at 279–283 (GKEGP) is the Selectivity filter part_2 element. Intramembrane regions (helical) lie at residues 312–324 (VLSA…VSVA) and 328–336 (PIGGVLFSL). Helical transmembrane passes span 348–366 (LWRS…RSIN), 389–414 (LVPF…IAWC), 422–442 (LGKY…ILAF), 498–518 (MWQL…TFGM), and 523–542 (GLFI…LGVG). The short motif at 523–527 (GLFIP) is the Selectivity filter part_3 element. Residue phenylalanine 525 participates in chloride binding. Residues 570-584 (GLYAMVGAAACLGGV) constitute an intramembrane region (helical). Residues 585 to 587 (TRM) constitute an intramembrane region (note=Loop between two helices). The segment at residues 588 to 599 (TVSLVVIMFELT) is an intramembrane region (helical). An intramembrane region (note=Loop between two helices) is located at residues 600–604 (GGLEY). Residues 605-622 (IVPLMAAAMTSKWVADAL) traverse the membrane as a helical segment. Residues 623–816 (GREGIYDAHI…NQDPDSILFN (194 aa)) are Cytoplasmic-facing. A chloride-binding site is contributed by tyrosine 628. 2 CBS domains span residues 656–720 (MKPR…ARKK) and 752–812 (ILDL…DPDS). Residues threonine 666, 687–689 (YSG), and 794–797 (TKKD) contribute to the ATP site.

It belongs to the chloride channel (TC 2.A.49) family. ClC-5/CLCN5 subfamily. As to quaternary structure, interacts with NEDD4 and NEDD4L. In terms of processing, ubiquitinated by NEDD4L in the presence of albumin; which promotes endocytosis and proteasomal degradation.

The protein resides in the golgi apparatus membrane. Its subcellular location is the endosome membrane. It localises to the cell membrane. The enzyme catalyses 2 chloride(in) + H(+)(out) = 2 chloride(out) + H(+)(in). Proton-coupled chloride transporter. Functions as antiport system and exchanges chloride ions against protons. Important for normal acidification of the endosome lumen. May play an important role in renal tubular function. The CLC channel family contains both chloride channels and proton-coupled anion transporters that exchange chloride or another anion for protons. The absence of conserved gating glutamate residues is typical for family members that function as channels. In Sus scrofa (Pig), this protein is H(+)/Cl(-) exchange transporter 5 (CLCN5).